We begin with the raw amino-acid sequence, 455 residues long: L-serine dehydratase (455 aa).

This sequence belongs to the iron-sulfur dependent L-serine dehydratase family. [4Fe-4S] cluster is required as a cofactor.

The catalysed reaction is L-serine = pyruvate + NH4(+). The protein operates within carbohydrate biosynthesis; gluconeogenesis. This chain is L-serine dehydratase (sdaA), found in Helicobacter pylori (strain ATCC 700392 / 26695) (Campylobacter pylori).